The following is a 367-amino-acid chain: NADH-quinone oxidoreductase subunit D (367 aa).

Belongs to the complex I 49 kDa subunit family. NDH-1 is composed of 14 different subunits. Subunits NuoB, C, D, E, F, and G constitute the peripheral sector of the complex.

The protein localises to the cell membrane. The catalysed reaction is a quinone + NADH + 5 H(+)(in) = a quinol + NAD(+) + 4 H(+)(out). Functionally, NDH-1 shuttles electrons from NADH, via FMN and iron-sulfur (Fe-S) centers, to quinones in the respiratory chain. The immediate electron acceptor for the enzyme in this species is believed to be ubiquinone. Couples the redox reaction to proton translocation (for every two electrons transferred, four hydrogen ions are translocated across the cytoplasmic membrane), and thus conserves the redox energy in a proton gradient. In Dehalococcoides mccartyi (strain ATCC BAA-2100 / JCM 16839 / KCTC 5957 / BAV1), this protein is NADH-quinone oxidoreductase subunit D.